The chain runs to 548 residues: Membrane protein insertase YidC (548 aa).

A helical transmembrane segment spans residues 6 to 26 (NLFLIAFLFVSFMIWQAWQTD). The segment at 30–53 (QPLQTQTTQNTTSAAGDAVNQGVP) is disordered. The next 4 membrane-spanning stretches (helical) occupy residues 345 to 365 (KFLHGFIGNWGFSIIVITFIV), 420 to 440 (LGGCLPLVIQMPIFLALYYML), 458 to 478 (LAAQDPYYILPILMGVTMFFI), and 499 to 519 (PVIFTVFFLWFPSGLVLYYIV).

This sequence belongs to the OXA1/ALB3/YidC family. Type 1 subfamily. In terms of assembly, interacts with the Sec translocase complex via SecD. Specifically interacts with transmembrane segments of nascent integral membrane proteins during membrane integration.

Its subcellular location is the cell inner membrane. In terms of biological role, required for the insertion and/or proper folding and/or complex formation of integral membrane proteins into the membrane. Involved in integration of membrane proteins that insert both dependently and independently of the Sec translocase complex, as well as at least some lipoproteins. Aids folding of multispanning membrane proteins. This Erwinia tasmaniensis (strain DSM 17950 / CFBP 7177 / CIP 109463 / NCPPB 4357 / Et1/99) protein is Membrane protein insertase YidC.